We begin with the raw amino-acid sequence, 191 residues long: Probable rho GDP-dissociation inhibitor (191 aa).

The disordered stretch occupies residues 1–22 (MSDHENTGENTSEYQYKQPPQK). Residues 8–21 (GENTSEYQYKQPPQ) are compositionally biased toward polar residues.

The protein belongs to the Rho GDI family.

It is found in the cytoplasm. Its function is as follows. Regulates the GDP/GTP exchange reaction of the Rho proteins by inhibiting the dissociation of GDP from them, and the subsequent binding of GTP to them. The polypeptide is Probable rho GDP-dissociation inhibitor (rhi-1) (Caenorhabditis elegans).